A 37-amino-acid chain; its full sequence is Palicourein (37 aa).

Positions 1–37 form a cross-link, cyclopeptide (Gly-Asn); it reads GDPTFCGETCRVIPVCTYSAALGCTCDDRSDGLCKRN. Disulfide bonds link cysteine 6-cysteine 24, cysteine 10-cysteine 26, and cysteine 16-cysteine 34.

This sequence belongs to the cyclotide family. In terms of processing, this is a cyclic peptide.

Its function is as follows. Probably participates in a plant defense mechanism. Inhibits the cytopathic effects of the human immunodeficiency virus. The protein is Palicourein of Palicourea condensata (Cappel).